The chain runs to 238 residues: uncharacterized protein (238 aa).

Residues 1 to 68 enclose the HTH gntR-type domain; it reads MIYKSIAERL…HGSGTYLVRK (68 aa). Residues 28–47 constitute a DNA-binding region (H-T-H motif); sequence EKKLAEEFAVSRMTIRKAID.

This is an uncharacterized protein from Escherichia coli (strain K12).